The chain runs to 380 residues: Cytochrome b (380 aa).

The next 4 membrane-spanning stretches (helical) occupy residues 34–54, 78–99, 114–134, and 179–199; these read FGSLLGLCLIIQILTGLFLAM, WLIRNTHANGASMFFICVYLHI, WNIGVIILLLLMATAFVGYVL, and FFTFHFLLPFVIVALTMVHLL. Heme b contacts are provided by His-84 and His-98. His-183 and His-197 together coordinate heme b. His-202 contributes to the a ubiquinone binding site. 4 consecutive transmembrane segments (helical) span residues 227–247, 289–309, 321–341, and 348–368; these read YKDLLGFFILLFFLTFLALFT, LGGVLALAFSILILLLVPILH, ISQLLFWLLVANTIILTWIGG, and FITIGQIASITYFSFFLILFP.

The protein belongs to the cytochrome b family. As to quaternary structure, the cytochrome bc1 complex contains 3 respiratory subunits (MT-CYB, CYC1 and UQCRFS1), 2 core proteins (UQCRC1 and UQCRC2) and probably 6 low-molecular weight proteins. Heme b is required as a cofactor.

It is found in the mitochondrion inner membrane. Functionally, component of the ubiquinol-cytochrome c reductase complex (complex III or cytochrome b-c1 complex) that is part of the mitochondrial respiratory chain. The b-c1 complex mediates electron transfer from ubiquinol to cytochrome c. Contributes to the generation of a proton gradient across the mitochondrial membrane that is then used for ATP synthesis. This chain is Cytochrome b (mt-cyb), found in Pastinachus sephen (Cowtail stingray).